The chain runs to 1168 residues: MTILTTLIKEDNHFQDLNQVFGQANTLVTGLSPSAKVTMIAEKYAQSNQQLLLITNNLYQADKLETDLLQFIDAEELYKYPVQDIMTEEFSTQSPQLMSERIRTLTALAQGKKGLFIVPLNGLKKWLTPVEMWQNHQMTLRVGEDIDVDQFLNKLVNMGYKRESVVSHIGEFSLRGGIIDIFPLIGEPIRIELFDTEIDSIRDFDVETQRSKDNIEEVDITTASDYIITEEVIRHLKEELKTAYENTRPKIDKSVRNDLKETYESFKLFESTYFDHQILRRLVAFMYETPSTIIEYFQKDAIIAVDEFNRIKETEESLTVESDSFISNIIESGNGFIGQSFIKYDDFETLIEGYPVTYFSLFATTMPIKLNHIIKFSCKPVQQFYGQYDIMRSEFQRYVNQNYHIVVLVETETKVERMQAMLSEMHIPSITKLHRSMSSGQAVIIEGSLSEGFELPDMGLVVITERELFKSKQKKQRKRTKAISNAEKIKSYQDLNVGDYIVHVHHGVGRYLGVETLEVGQTHRDYIKLQYKGTDQLFVPVDQMDQVQKYVASEDKTPKLNKLGGSEWKKTKAKVQQSVEDIAEELIDLYKEREMAEGYQYGEDTAEQTTFELDFPYELTPDQAKSIDEIKDDMQKSRPMDRLLCGDVGYGKTEVAVRAAFKAVMEGKQVAFLVPTTILAQQHYETLIERMQDFPVEIQLMSRFRTPKEIKQTKEGLKTGFVDIVVGTHKLLSKDIQYKDLGLLIVDEEQRFGVRHKERIKTLKHNVDVLTLTATPIPRTLHMSMLGVRDLSVIETPPENRFPVQTYVLEQNMSFIKEALERELSRDGQVFYLYNKVQSIYEKREQLQMLMPDANIAVAHGQMTERDLEETMLSFINNEYDILVTTTIIETGVDVPNANTLIIEDADRFGLSQLYQLRGRVGRSSRIGYAYFLHPANKVLTETAEDRLQAIKEFTELGSGFKIAMRDLNIRGAGNLLGKQQHGFIDTVGFDLYSQMLEEAVNEKRGIKEPESEVPEVEVDLNLDAYLPTEYIANEQAKIEIYKKLRKTETFDQIIDIKDELIDRFNDYPVEVARLLDIVEIKVHALHSGITLIKDKGKIIDIHLSVKATENIDGEVLFKATQPLGRTMKVGVQNNAMTITLTKQNQWLDSLKFLVKCIEESMRISDEA.

Residues 633 to 794 (DMQKSRPMDR…MLGVRDLSVI (162 aa)) enclose the Helicase ATP-binding domain. An ATP-binding site is contributed by 646-653 (GDVGYGKT). The DEEQ box signature appears at 747-750 (DEEQ). A Helicase C-terminal domain is found at 808-969 (VLEQNMSFIK…GFKIAMRDLN (162 aa)).

It in the N-terminal section; belongs to the UvrB family. This sequence in the C-terminal section; belongs to the helicase family. RecG subfamily.

The protein localises to the cytoplasm. Couples transcription and DNA repair by recognizing RNA polymerase (RNAP) stalled at DNA lesions. Mediates ATP-dependent release of RNAP and its truncated transcript from the DNA, and recruitment of nucleotide excision repair machinery to the damaged site. In Staphylococcus aureus (strain Mu50 / ATCC 700699), this protein is Transcription-repair-coupling factor.